Consider the following 722-residue polypeptide: Glycine--tRNA ligase beta subunit (722 aa).

This sequence belongs to the class-II aminoacyl-tRNA synthetase family. In terms of assembly, tetramer of two alpha and two beta subunits.

The protein resides in the cytoplasm. It catalyses the reaction tRNA(Gly) + glycine + ATP = glycyl-tRNA(Gly) + AMP + diphosphate. This chain is Glycine--tRNA ligase beta subunit, found in Xylella fastidiosa (strain Temecula1 / ATCC 700964).